Here is a 193-residue protein sequence, read N- to C-terminus: Ribonuclease HII (193 aa).

One can recognise an RNase H type-2 domain in the interval 15–193; that stretch reads CIVAGIDEAG…PYHRRSFRCC (179 aa). Residues Asp-21, Glu-22, and Asp-112 each contribute to the a divalent metal cation site.

It belongs to the RNase HII family. The cofactor is Mn(2+). It depends on Mg(2+) as a cofactor.

It localises to the cytoplasm. It carries out the reaction Endonucleolytic cleavage to 5'-phosphomonoester.. In terms of biological role, endonuclease that specifically degrades the RNA of RNA-DNA hybrids. The polypeptide is Ribonuclease HII (Rickettsia africae (strain ESF-5)).